The following is a 670-amino-acid chain: Transketolase, chromosomal (670 aa).

Histidine 32 is a binding site for substrate. Residues histidine 72 and 120 to 122 (GPL) each bind thiamine diphosphate. Aspartate 161 is a binding site for Mg(2+). Thiamine diphosphate contacts are provided by glycine 162 and asparagine 191. Mg(2+)-binding residues include asparagine 191 and isoleucine 193. Substrate contacts are provided by histidine 267, arginine 364, and serine 391. Histidine 267 is a binding site for thiamine diphosphate. Glutamate 417 acts as the Proton donor in catalysis. Residue phenylalanine 443 coordinates thiamine diphosphate. Residues histidine 467, aspartate 475, and arginine 526 each contribute to the substrate site.

The protein belongs to the transketolase family. In terms of assembly, homodimer. Requires Mg(2+) as cofactor. The cofactor is Ca(2+). Mn(2+) serves as cofactor. Co(2+) is required as a cofactor. It depends on thiamine diphosphate as a cofactor.

It carries out the reaction D-sedoheptulose 7-phosphate + D-glyceraldehyde 3-phosphate = aldehydo-D-ribose 5-phosphate + D-xylulose 5-phosphate. It participates in carbohydrate biosynthesis; Calvin cycle. Its function is as follows. Catalyzes the transfer of a two-carbon ketol group from a ketose donor to an aldose acceptor, via a covalent intermediate with the cofactor thiamine pyrophosphate. This Cupriavidus necator (strain ATCC 17699 / DSM 428 / KCTC 22496 / NCIMB 10442 / H16 / Stanier 337) (Ralstonia eutropha) protein is Transketolase, chromosomal (cbbTC).